Here is an 832-residue protein sequence, read N- to C-terminus: G-type lectin S-receptor-like serine/threonine-protein kinase RLK1 (832 aa).

The N-terminal stretch at 1 to 24 (MGSLSCSIIHLVLILQLQTFFVFS) is a signal peptide. At 25-461 (QNIRNGSVPV…VPVTGNRAKK (437 aa)) the chain is on the extracellular side. N-linked (GlcNAc...) asparagine glycosylation is found at asparagine 29, asparagine 92, asparagine 100, asparagine 178, asparagine 240, and asparagine 251. One can recognise a Bulb-type lectin domain in the interval 37-157 (SLTASESQQI…GSEDSDEVLW (121 aa)). An EGF-like; atypical domain is found at 299 to 349 (RDNMCSPDDALGNMACGYNNICSLGNNKRPKCECPERFVLKDPSNEYGDCL). 3 cysteine pairs are disulfide-bonded: cysteine 303–cysteine 320, cysteine 314–cysteine 330, and cysteine 332–cysteine 348. The PAN domain occupies 357-446 (CRPENQTANS…DSDTFIKVRN (90 aa)). N-linked (GlcNAc...) asparagine glycosylation occurs at asparagine 361. Intrachain disulfides connect cysteine 397–cysteine 420 and cysteine 401–cysteine 407. Residue asparagine 446 is glycosylated (N-linked (GlcNAc...) asparagine). The helical transmembrane segment at 462 to 482 (LDWLIIACSVLLGTSAFVIFD) threads the bilayer. Residues 483 to 832 (TSCSYRKTKK…SLSSDPVSLV (350 aa)) are Cytoplasmic-facing. The Protein kinase domain maps to 531–803 (RDFTEELGRG…NVTQMLEGVI (273 aa)). Residues 537 to 545 (LGRGAFGIV) and lysine 563 contribute to the ATP site. The tract at residues 622 to 638 (RRPRPSWEDRKNIAVAI) is caM-binding. Aspartate 657 (proton acceptor) is an active-site residue.

The protein belongs to the protein kinase superfamily. Ser/Thr protein kinase family.

Its subcellular location is the cell membrane. The enzyme catalyses L-seryl-[protein] + ATP = O-phospho-L-seryl-[protein] + ADP + H(+). It catalyses the reaction L-threonyl-[protein] + ATP = O-phospho-L-threonyl-[protein] + ADP + H(+). The protein is G-type lectin S-receptor-like serine/threonine-protein kinase RLK1 (RLK1) of Arabidopsis thaliana (Mouse-ear cress).